The chain runs to 648 residues: Macrolide export ATP-binding/permease protein MacB (648 aa).

Positions 5–243 constitute an ABC transporter domain; it reads LELKDIRRSY…TGGTEPVVNT (239 aa). Residue 41–48 participates in ATP binding; that stretch reads GASGSGKS. The next 4 membrane-spanning stretches (helical) occupy residues 273–293, 523–543, 576–596, and 611–631; these read LLTMLGIIIGIASVVSIVVVG, LFLTLVAVISLVVGGIGVMNI, AVLVCLVGGALGITLSLLIAF, and PLALLLAFLCSTVTGILFGWL.

Belongs to the ABC transporter superfamily. Macrolide exporter (TC 3.A.1.122) family. Homodimer. Part of the tripartite efflux system MacAB-TolC, which is composed of an inner membrane transporter, MacB, a periplasmic membrane fusion protein, MacA, and an outer membrane component, TolC. The complex forms a large protein conduit and can translocate molecules across both the inner and outer membranes. Interacts with MacA.

The protein localises to the cell inner membrane. Its function is as follows. Part of the tripartite efflux system MacAB-TolC. MacB is a non-canonical ABC transporter that contains transmembrane domains (TMD), which form a pore in the inner membrane, and an ATP-binding domain (NBD), which is responsible for energy generation. Confers resistance against macrolides. The protein is Macrolide export ATP-binding/permease protein MacB of Escherichia coli (strain UTI89 / UPEC).